The sequence spans 251 residues: tRNA (guanine-N(7)-)-methyltransferase (251 aa).

S-adenosyl-L-methionine is bound by residues Glu-80, Glu-105, Asp-132, and Asp-155. Asp-155 is an active-site residue. Substrate-binding positions include Lys-159, Asp-191, and 228 to 231; that span reads TKFE.

Belongs to the class I-like SAM-binding methyltransferase superfamily. TrmB family.

The enzyme catalyses guanosine(46) in tRNA + S-adenosyl-L-methionine = N(7)-methylguanosine(46) in tRNA + S-adenosyl-L-homocysteine. The protein operates within tRNA modification; N(7)-methylguanine-tRNA biosynthesis. Its function is as follows. Catalyzes the formation of N(7)-methylguanine at position 46 (m7G46) in tRNA. The protein is tRNA (guanine-N(7)-)-methyltransferase of Histophilus somni (strain 129Pt) (Haemophilus somnus).